We begin with the raw amino-acid sequence, 504 residues long: 2,3-bisphosphoglycerate-independent phosphoglycerate mutase (504 aa).

2 residues coordinate Mn(2+): D11 and S61. The active-site Phosphoserine intermediate is S61. Substrate contacts are provided by residues H122, 152–153, R183, R189, 255–258, and K329; these read RD and RNDR. D396, H400, D437, H438, and H455 together coordinate Mn(2+).

Belongs to the BPG-independent phosphoglycerate mutase family. In terms of assembly, monomer. Mn(2+) is required as a cofactor.

The enzyme catalyses (2R)-2-phosphoglycerate = (2R)-3-phosphoglycerate. Its pathway is carbohydrate degradation; glycolysis; pyruvate from D-glyceraldehyde 3-phosphate: step 3/5. Its function is as follows. Catalyzes the interconversion of 2-phosphoglycerate and 3-phosphoglycerate. This chain is 2,3-bisphosphoglycerate-independent phosphoglycerate mutase, found in Bacteroides fragilis (strain YCH46).